The primary structure comprises 571 residues: Isocitrate dehydrogenase kinase/phosphatase 2 (571 aa).

ATP-binding positions include 313–319 (APGTPGM) and K334. D369 is an active-site residue.

The protein belongs to the AceK family.

The protein resides in the cytoplasm. The enzyme catalyses L-seryl-[isocitrate dehydrogenase] + ATP = O-phospho-L-seryl-[isocitrate dehydrogenase] + ADP + H(+). In terms of biological role, bifunctional enzyme which can phosphorylate or dephosphorylate isocitrate dehydrogenase (IDH) on a specific serine residue. This is a regulatory mechanism which enables bacteria to bypass the Krebs cycle via the glyoxylate shunt in response to the source of carbon. When bacteria are grown on glucose, IDH is fully active and unphosphorylated, but when grown on acetate or ethanol, the activity of IDH declines drastically concomitant with its phosphorylation. This is Isocitrate dehydrogenase kinase/phosphatase 2 from Pseudoalteromonas translucida (strain TAC 125).